The chain runs to 353 residues: Photosystem II protein D1 (353 aa).

At threonine 2 the chain carries N-acetylthreonine. The residue at position 2 (threonine 2) is a Phosphothreonine. 3 consecutive transmembrane segments (helical) span residues 29–46, 118–133, and 142–156; these read YIGW…TATS, HFLL…EWEL, and WIAV…AATA. Histidine 118 is a binding site for chlorophyll a. Residue tyrosine 126 participates in pheophytin a binding. [CaMn4O5] cluster is bound by residues aspartate 170 and glutamate 189. Residues 197 to 218 form a helical membrane-spanning segment; the sequence is FHMLGVAGVFGGSLFSAMHGSL. Histidine 198 is a chlorophyll a binding site. A quinone contacts are provided by residues histidine 215 and 264-265; that span reads SF. Residue histidine 215 participates in Fe cation binding. Position 272 (histidine 272) interacts with Fe cation. A helical transmembrane segment spans residues 274–288; that stretch reads FLAAWPVVGIWFTAL. [CaMn4O5] cluster is bound by residues histidine 332, glutamate 333, aspartate 342, and alanine 344. Residues 345-353 constitute a propeptide that is removed on maturation; that stretch reads AVEAPSING.

This sequence belongs to the reaction center PufL/M/PsbA/D family. In terms of assembly, PSII is composed of 1 copy each of membrane proteins PsbA, PsbB, PsbC, PsbD, PsbE, PsbF, PsbH, PsbI, PsbJ, PsbK, PsbL, PsbM, PsbT, PsbX, PsbY, PsbZ, Psb30/Ycf12, at least 3 peripheral proteins of the oxygen-evolving complex and a large number of cofactors. It forms dimeric complexes. The D1/D2 heterodimer binds P680, chlorophylls that are the primary electron donor of PSII, and subsequent electron acceptors. It shares a non-heme iron and each subunit binds pheophytin, quinone, additional chlorophylls, carotenoids and lipids. D1 provides most of the ligands for the Mn4-Ca-O5 cluster of the oxygen-evolving complex (OEC). There is also a Cl(-1) ion associated with D1 and D2, which is required for oxygen evolution. The PSII complex binds additional chlorophylls, carotenoids and specific lipids. serves as cofactor. Tyr-161 forms a radical intermediate that is referred to as redox-active TyrZ, YZ or Y-Z. Post-translationally, C-terminally processed by CTPA; processing is essential to allow assembly of the oxygen-evolving complex and thus photosynthetic growth.

The protein localises to the plastid. The protein resides in the chloroplast thylakoid membrane. The enzyme catalyses 2 a plastoquinone + 4 hnu + 2 H2O = 2 a plastoquinol + O2. Photosystem II (PSII) is a light-driven water:plastoquinone oxidoreductase that uses light energy to abstract electrons from H(2)O, generating O(2) and a proton gradient subsequently used for ATP formation. It consists of a core antenna complex that captures photons, and an electron transfer chain that converts photonic excitation into a charge separation. The D1/D2 (PsbA/PsbD) reaction center heterodimer binds P680, the primary electron donor of PSII as well as several subsequent electron acceptors. In Chloranthus spicatus (Chulantree), this protein is Photosystem II protein D1.